We begin with the raw amino-acid sequence, 141 residues long: Hemoglobin subunit alpha (141 aa).

The Globin domain occupies Val-1–Arg-141. Position 3 is a phosphoserine (Ser-3). Residues Lys-7 and Lys-11 each carry the N6-succinyllysine modification. Residue Lys-16 is modified to N6-acetyllysine; alternate. N6-succinyllysine; alternate is present on Lys-16. Tyr-24 carries the post-translational modification Phosphotyrosine. At Ser-35 the chain carries Phosphoserine. At Lys-40 the chain carries N6-succinyllysine. Ser-49 carries the phosphoserine modification. Residue His-58 coordinates O2. His-87 contributes to the heme b binding site. Ser-102 carries the phosphoserine modification. Residue Thr-108 is modified to Phosphothreonine. Phosphoserine is present on Ser-124. Residues Thr-134 and Thr-137 each carry the phosphothreonine modification. The residue at position 138 (Ser-138) is a Phosphoserine.

Belongs to the globin family. Heterotetramer of two alpha chains and two beta chains. Red blood cells.

Functionally, involved in oxygen transport from the lung to the various peripheral tissues. In terms of biological role, hemopressin acts as an antagonist peptide of the cannabinoid receptor CNR1. Hemopressin-binding efficiently blocks cannabinoid receptor CNR1 and subsequent signaling. The polypeptide is Hemoglobin subunit alpha (HBA) (Hippopotamus amphibius (Hippopotamus)).